The primary structure comprises 385 residues: Acetylornithine aminotransferase (385 aa).

Pyridoxal 5'-phosphate is bound by residues 94 to 95 (GT) and Phe126. Position 129 (Arg129) interacts with N(2)-acetyl-L-ornithine. Pyridoxal 5'-phosphate is bound at residue 211–214 (DEVQ). Lys240 is modified (N6-(pyridoxal phosphate)lysine). Thr267 provides a ligand contact to N(2)-acetyl-L-ornithine. Thr268 contacts pyridoxal 5'-phosphate.

It belongs to the class-III pyridoxal-phosphate-dependent aminotransferase family. ArgD subfamily. As to quaternary structure, homodimer. Requires pyridoxal 5'-phosphate as cofactor.

It is found in the cytoplasm. It carries out the reaction N(2)-acetyl-L-ornithine + 2-oxoglutarate = N-acetyl-L-glutamate 5-semialdehyde + L-glutamate. It participates in amino-acid biosynthesis; L-arginine biosynthesis; N(2)-acetyl-L-ornithine from L-glutamate: step 4/4. This is Acetylornithine aminotransferase from Thermotoga maritima (strain ATCC 43589 / DSM 3109 / JCM 10099 / NBRC 100826 / MSB8).